Consider the following 83-residue polypeptide: Small ribosomal subunit protein bS18 (83 aa).

This sequence belongs to the bacterial ribosomal protein bS18 family. As to quaternary structure, part of the 30S ribosomal subunit. Forms a tight heterodimer with protein bS6.

Its function is as follows. Binds as a heterodimer with protein bS6 to the central domain of the 16S rRNA, where it helps stabilize the platform of the 30S subunit. The polypeptide is Small ribosomal subunit protein bS18 (Desulfosudis oleivorans (strain DSM 6200 / JCM 39069 / Hxd3) (Desulfococcus oleovorans)).